The sequence spans 152 residues: Large ribosomal subunit protein bL9 (152 aa).

This sequence belongs to the bacterial ribosomal protein bL9 family.

Its function is as follows. Binds to the 23S rRNA. The chain is Large ribosomal subunit protein bL9 from Parasynechococcus marenigrum (strain WH8102).